The chain runs to 21 residues: Peptide PGLa-R3 (21 aa).

At Leu21 the chain carries Leucine amide.

Expressed by the skin glands.

The protein resides in the secreted. Functionally, antimicrobial peptide. In Xenopus ruwenzoriensis (Uganda clawed frog), this protein is Peptide PGLa-R3.